The sequence spans 583 residues: Steryl-sulfatase (583 aa).

The N-terminal stretch at 1–21 is a signal peptide; sequence MPLRKMKIPFLLLFFLWEAES. Residues 22–184 lie on the Lumenal side of the membrane; it reads HAASRPNIIL…GSVFTTGFKR (163 aa). Ca(2+)-binding residues include Asp-35 and Asp-36. A glycan (N-linked (GlcNAc...) asparagine) is linked at Asn-47. Cys-75 provides a ligand contact to Ca(2+). Cys-75 acts as the Nucleophile in catalysis. A 3-oxoalanine (Cys) modification is found at Cys-75. Residue His-136 is part of the active site. Cystine bridges form between Cys-141-Cys-148 and Cys-170-Cys-242. Residues 185–208 form a helical membrane-spanning segment; sequence LVFLPLQIVGVTLLTLAALNCLGL. The Cytoplasmic segment spans residues 209–212; sequence LHVP. Residues 213 to 234 traverse the membrane as a helical segment; that stretch reads LGVFFSLLFLAALILTLFLGFL. The Lumenal portion of the chain corresponds to 235 to 583; sequence HYFRPLNCFM…REKQDKRLSR (349 aa). N-linked (GlcNAc...) asparagine glycosylation occurs at Asn-259. Residues Asp-342 and Gln-343 each contribute to the Ca(2+) site. Intrachain disulfides connect Cys-446–Cys-489, Cys-481–Cys-487, Cys-562–Cys-570, and Cys-563–Cys-572.

The protein belongs to the sulfatase family. Homodimer. Ca(2+) is required as a cofactor. In terms of processing, the conversion to 3-oxoalanine (also known as C-formylglycine, FGly), of a serine or cysteine residue in prokaryotes and of a cysteine residue in eukaryotes, is critical for catalytic activity.

The protein localises to the cytoplasmic vesicle. It is found in the secretory vesicle. The protein resides in the microneme membrane. It localises to the endoplasmic reticulum membrane. It carries out the reaction dehydroepiandrosterone 3-sulfate + H2O = 3beta-hydroxyandrost-5-en-17-one + sulfate + H(+). The catalysed reaction is estrone 3-sulfate + H2O = estrone + sulfate + H(+). Catalyzes the conversion of sulfated steroid precursors, such as dehydroepiandrosterone sulfate (DHEA-S) and estrone sulfate to the free steroid. The chain is Steryl-sulfatase (STS) from Homo sapiens (Human).